A 490-amino-acid chain; its full sequence is ATP synthase subunit beta, plastid (490 aa).

170–177 (GGAGVGKT) serves as a coordination point for ATP.

This sequence belongs to the ATPase alpha/beta chains family. F-type ATPases have 2 components, CF(1) - the catalytic core - and CF(0) - the membrane proton channel. CF(1) has five subunits: alpha(3), beta(3), gamma(1), delta(1), epsilon(1). CF(0) has four main subunits: a(1), b(1), b'(1) and c(9-12).

Its subcellular location is the plastid membrane. The catalysed reaction is ATP + H2O + 4 H(+)(in) = ADP + phosphate + 5 H(+)(out). Functionally, produces ATP from ADP in the presence of a proton gradient across the membrane. The catalytic sites are hosted primarily by the beta subunits. The protein is ATP synthase subunit beta, plastid (atpB) of Cuscuta japonica (Japanese dodder).